Reading from the N-terminus, the 299-residue chain is Ribosomal RNA small subunit methyltransferase A (299 aa).

S-adenosyl-L-methionine-binding residues include N44, V46, G71, E92, D122, and N141.

Belongs to the class I-like SAM-binding methyltransferase superfamily. rRNA adenine N(6)-methyltransferase family. RsmA subfamily.

It localises to the cytoplasm. The enzyme catalyses adenosine(1518)/adenosine(1519) in 16S rRNA + 4 S-adenosyl-L-methionine = N(6)-dimethyladenosine(1518)/N(6)-dimethyladenosine(1519) in 16S rRNA + 4 S-adenosyl-L-homocysteine + 4 H(+). Its function is as follows. Specifically dimethylates two adjacent adenosines (A1518 and A1519) in the loop of a conserved hairpin near the 3'-end of 16S rRNA in the 30S particle. May play a critical role in biogenesis of 30S subunits. This Rhodococcus erythropolis (strain PR4 / NBRC 100887) protein is Ribosomal RNA small subunit methyltransferase A.